The sequence spans 426 residues: Serine--tRNA ligase (426 aa).

233–235 (TAE) is a binding site for L-serine. 264-266 (RSE) lines the ATP pocket. An L-serine-binding site is contributed by glutamate 287. 351–354 (EISS) lines the ATP pocket. Residue serine 387 coordinates L-serine.

This sequence belongs to the class-II aminoacyl-tRNA synthetase family. Type-1 seryl-tRNA synthetase subfamily. As to quaternary structure, homodimer. The tRNA molecule binds across the dimer.

Its subcellular location is the cytoplasm. It catalyses the reaction tRNA(Ser) + L-serine + ATP = L-seryl-tRNA(Ser) + AMP + diphosphate + H(+). The catalysed reaction is tRNA(Sec) + L-serine + ATP = L-seryl-tRNA(Sec) + AMP + diphosphate + H(+). Its pathway is aminoacyl-tRNA biosynthesis; selenocysteinyl-tRNA(Sec) biosynthesis; L-seryl-tRNA(Sec) from L-serine and tRNA(Sec): step 1/1. In terms of biological role, catalyzes the attachment of serine to tRNA(Ser). Is also able to aminoacylate tRNA(Sec) with serine, to form the misacylated tRNA L-seryl-tRNA(Sec), which will be further converted into selenocysteinyl-tRNA(Sec). In Pseudomonas fluorescens (strain Pf0-1), this protein is Serine--tRNA ligase.